A 467-amino-acid chain; its full sequence is Glutamate--tRNA ligase 2 (467 aa).

The 'HIGH' region motif lies at 18-28 (PSPTGYLHVGG). Residues 238 to 242 (PLSKR) carry the 'KMSKS' region motif. Lys241 contacts ATP.

This sequence belongs to the class-I aminoacyl-tRNA synthetase family. Glutamate--tRNA ligase type 1 subfamily. In terms of assembly, monomer.

Its subcellular location is the cytoplasm. It carries out the reaction tRNA(Glu) + L-glutamate + ATP = L-glutamyl-tRNA(Glu) + AMP + diphosphate. Functionally, catalyzes the attachment of glutamate to tRNA(Glu) in a two-step reaction: glutamate is first activated by ATP to form Glu-AMP and then transferred to the acceptor end of tRNA(Glu). The sequence is that of Glutamate--tRNA ligase 2 from Fervidobacterium nodosum (strain ATCC 35602 / DSM 5306 / Rt17-B1).